Here is a 535-residue protein sequence, read N- to C-terminus: UDP-glucuronosyltransferase 1A1 (535 aa).

The N-terminal stretch at 1 to 29 (MTVVCWSSRLLLLLPYLLLCVFGPSASHA) is a signal peptide. 3 N-linked (GlcNAc...) asparagine glycosylation sites follow: asparagine 89, asparagine 297, and asparagine 435. Residues 493-509 (VIGFLLAIVLTVVFIVF) traverse the membrane as a helical segment.

This sequence belongs to the UDP-glycosyltransferase family. As to quaternary structure, homodimers. Homooligomer. Interacts with UGT1A3, UGT1A4, UGT1A6, UGT1A7, UGT1A8, UGT1A9 and UGT1A10 to form heterodimers. Highly expressed in liver and at lower levels in colon, kidney, stomach and intestine.

It is found in the endoplasmic reticulum membrane. The enzyme catalyses glucuronate acceptor + UDP-alpha-D-glucuronate = acceptor beta-D-glucuronoside + UDP + H(+). It catalyses the reaction 17beta-estradiol + UDP-alpha-D-glucuronate = 17beta-estradiol 3-O-(beta-D-glucuronate) + UDP + H(+). It carries out the reaction 2-hydroxyestrone + UDP-alpha-D-glucuronate = 2-hydroxyestrone 3-O-(beta-D-glucuronate) + UDP + H(+). The catalysed reaction is 2-hydroxy-17beta-estradiol + UDP-alpha-D-glucuronate = 2-hydroxy-17beta-estradiol 3-O-(beta-D-glucuronate) + UDP + H(+). The enzyme catalyses 2-methoxy-17beta-estradiol + UDP-alpha-D-glucuronate = 2-methoxy-17beta-estradiol 3-O-(beta-D-glucuronate) + UDP + H(+). It catalyses the reaction 17alpha-estradiol + UDP-alpha-D-glucuronate = 17alpha-estradiol 3-O-(beta-D-glucuronate) + UDP + H(+). It carries out the reaction 16beta,17beta-estriol + UDP-alpha-D-glucuronate = 16beta,17beta-estriol 16-O-(beta-D-glucuronate) + UDP + H(+). The catalysed reaction is losartan + UDP-alpha-D-glucuronate = losartan-2-N-beta-D-glucuronide + UDP. The enzyme catalyses prunetin + UDP-alpha-D-glucuronate = prunetin-4'-O-beta-D-glucuronide + UDP. It catalyses the reaction SN-38 + UDP-alpha-D-glucuronate = SN-38 O-beta-D-glucuronide + UDP + H(+). It carries out the reaction (4Z,15Z)-bilirubin IXalpha + UDP-alpha-D-glucuronate = (4Z,15Z)-bilirubin IXalpha C12-beta-D-glucuronoside + UDP. The catalysed reaction is (4Z,15Z)-bilirubin IXalpha + UDP-alpha-D-glucuronate = (4Z,15Z)-bilirubin IXalpha C8-beta-D-glucuronoside + UDP. The enzyme catalyses (4Z,15Z)-bilirubin IXalpha C8-beta-D-glucuronoside + UDP-alpha-D-glucuronate = (4Z,15Z)-bilirubin IXalpha C8,C12-beta-D-bisglucuronoside + UDP. It catalyses the reaction (4Z,15Z)-bilirubin IXalpha C12-beta-D-glucuronoside + UDP-alpha-D-glucuronate = (4Z,15Z)-bilirubin IXalpha C8,C12-beta-D-bisglucuronoside + UDP. It carries out the reaction 8-iso-prostaglandin F2alpha + UDP-alpha-D-glucuronate = 8-iso-prostaglandin F2alpha-glucuronide + UDP + H(+). The catalysed reaction is (5Z,8Z,11Z,14Z)-eicosatetraenoate + UDP-alpha-D-glucuronate = O-[(5Z),(8Z),(11Z),(14Z)-eicosatetraenoyl]-beta-D-glucuronate + UDP. The enzyme catalyses 15-hydroxy-(5Z,8Z,11Z,13E)-eicosatetraenoate + UDP-alpha-D-glucuronate = 15-O-(beta-D-glucuronosyl)-(5Z,8Z,11Z,14Z)-eicosatetraenoate + UDP + H(+). It catalyses the reaction 20-hydroxy-(5Z,8Z,11Z,14Z)-eicosatetraenoate + UDP-alpha-D-glucuronate = 20-O-(beta-D-glucuronosyl)-(5Z,8Z,11Z,14Z)-eicosatetraenoate + UDP + H(+). It carries out the reaction prostaglandin B1 + UDP-alpha-D-glucuronate = 15-O-(beta-D-glucuronosyl)-prostaglandin B1 + UDP + H(+). The catalysed reaction is (E)-ferulate + UDP-alpha-D-glucuronate = (E)-4-O-(beta-D-glucuronosyl)-ferulate + UDP + H(+). The enzyme catalyses (E)-ferulate + UDP-alpha-D-glucuronate = (E)-ferulic acid beta-D-glucuronate ester + UDP. UDP-glucuronosyltransferase (UGT) that catalyzes phase II biotransformation reactions in which lipophilic substrates are conjugated with glucuronic acid to increase the metabolite's water solubility, thereby facilitating excretion into either the urine or bile. Essential for the elimination and detoxification of drugs, xenobiotics and endogenous compounds. Catalyzes the glucuronidation of endogenous estrogen hormones such as estradiol, estrone and estriol. Involved in the glucuronidation of bilirubin, a degradation product occurring in the normal catabolic pathway that breaks down heme in vertebrates. Involved in the glucuronidation of arachidonic acid (AA) and AA-derived eicosanoids including 15-HETE, 20-HETE, PGB1 and F2-isoprostane (8-iso-PGF2alpha). Involved in the glucuronidation of the phytochemical ferulic acid at the phenolic or the carboxylic acid group. Also catalyzes the glucuronidation the isoflavones genistein, daidzein, glycitein, formononetin, biochanin A and prunetin, which are phytoestrogens with anticancer and cardiovascular properties. Involved in the glucuronidation of the AGTR1 angiotensin receptor antagonist losartan, a drug which can inhibit the effect of angiotensin II. Involved in the biotransformation of 7-ethyl-10-hydroxycamptothecin (SN-38), the pharmacologically active metabolite of the anticancer drug irinotecan. In Mus musculus (Mouse), this protein is UDP-glucuronosyltransferase 1A1.